Consider the following 71-residue polypeptide: Phosphatidylinositol N-acetylglucosaminyltransferase subunit Y (71 aa).

Over 1–3 (MFL) the chain is Cytoplasmic. The chain crosses the membrane as a helical span at residues 4-26 (SLPTLTVLIPLVSLAGLFYSASV). The Lumenal segment spans residues 27 to 44 (EENFPQGCTSTASLCFYS). The helical transmembrane segment at 45-65 (LLLPITIPVYVFFHLWTWMGI) threads the bilayer. The Cytoplasmic portion of the chain corresponds to 66–71 (KLFRHN).

In terms of assembly, component of the glycosylphosphatidylinositol-N-acetylglucosaminyltransferase (GPI-GnT) complex composed at least by PIGA, PIGC, PIGH, PIGP, PIGQ, PIGY and DPM2. Interacts directly with PIGA; this interaction regulates glycosylphosphatidylinositol-N-acetylglucosaminyltransferase activity. Does not interact with Ras proteins.

It localises to the endoplasmic reticulum membrane. Its pathway is glycolipid biosynthesis; glycosylphosphatidylinositol-anchor biosynthesis. Part of the glycosylphosphatidylinositol-N-acetylglucosaminyltransferase (GPI-GnT) complex that catalyzes the transfer of N-acetylglucosamine from UDP-N-acetylglucosamine to phosphatidylinositol and participates in the first step of GPI biosynthesis. May act by regulating the catalytic subunit PIGA. The protein is Phosphatidylinositol N-acetylglucosaminyltransferase subunit Y of Homo sapiens (Human).